The primary structure comprises 2312 residues: Protein Ycf2 (2312 aa).

An ATP-binding site is contributed by 1630–1637; the sequence is GSIGTGRS.

The protein belongs to the Ycf2 family.

The protein resides in the plastid. It localises to the chloroplast stroma. Probable ATPase of unknown function. Its presence in a non-photosynthetic plant (Epifagus virginiana) and experiments in tobacco indicate that it has an essential function which is probably not related to photosynthesis. The sequence is that of Protein Ycf2 from Manihot esculenta (Cassava).